A 172-amino-acid chain; its full sequence is Translocator protein 2 (172 aa).

Helical transmembrane passes span 3-23 (PQGA…SLLT), 45-65 (VLLA…YLVW), 80-100 (LGLY…FFAA), 104-124 (GLAL…ALIW), and 130-150 (LAAV…SIAY).

Belongs to the TspO/BZRP family. As to quaternary structure, homotetramer. May also form homodimer. In terms of tissue distribution, expressed in erythrocytes (at protein level).

The protein localises to the endoplasmic reticulum membrane. Its subcellular location is the cell membrane. Its function is as follows. Cholesterol-binding protein involved in the redistribution of cholesterol from lipid droplets to the endoplasmic reticulum. Required to meet cholesterol demands during erythropoietic differentiation. May play a role in transport processes at the plasma membrane of erythrocytes, including regulating VDAC-mediated ATP export, and import of the heme precursors protoporphyrin IX and 5-aminolevulinic acid. The protein is Translocator protein 2 of Canis lupus familiaris (Dog).